Consider the following 209-residue polypeptide: U1 small nuclear ribonucleoprotein C (209 aa).

Residues 4–36 form a Matrin-type zinc finger; the sequence is HYCDYCDVFLTHDSASVRKAHNSGRNHLANVRD. The span at 72–87 shows a compositional bias: low complexity; sequence PQHLQAPPQGGFAPPM. Residues 72 to 209 are disordered; the sequence is PQHLQAPPQG…RARMMGPGGR (138 aa). Pro residues-rich tracts occupy residues 93–150 and 159–191; these read GGFP…PFPP and PGAPSFPPPPGGFNGPPPPSGQNSQGPPPPTNP.

It belongs to the U1 small nuclear ribonucleoprotein C family. As to quaternary structure, U1 snRNP is composed of the 7 core Sm proteins B/B', D1, D2, D3, E, F and G that assemble in a heptameric protein ring on the Sm site of the small nuclear RNA to form the core snRNP, and at least 3 U1 snRNP-specific proteins U1-70K, U1-A and U1-C. U1-C interacts with U1 snRNA and the 5' splice-site region of the pre-mRNA.

The protein resides in the nucleus. Component of the spliceosomal U1 snRNP, which is essential for recognition of the pre-mRNA 5' splice-site and the subsequent assembly of the spliceosome. U1-C is directly involved in initial 5' splice-site recognition for both constitutive and regulated alternative splicing. The interaction with the 5' splice-site seems to precede base-pairing between the pre-mRNA and the U1 snRNA. Stimulates commitment or early (E) complex formation by stabilizing the base pairing of the 5' end of the U1 snRNA and the 5' splice-site region. The chain is U1 small nuclear ribonucleoprotein C from Coprinopsis cinerea (strain Okayama-7 / 130 / ATCC MYA-4618 / FGSC 9003) (Inky cap fungus).